We begin with the raw amino-acid sequence, 4576 residues long: Mucin-2 (4576 aa).

An N-terminal signal peptide occupies residues 1–20 (MGLPLARLVAACLVLALAKG). S21 carries the post-translational modification Phosphoserine. The VWFD 1 domain maps to 32–205 (HVCSTWGDFH…KINKPEVQCE (174 aa)). Disulfide bonds link C34-C166, C56-C204, C64-C163, C216-C253, C223-C248, C235-C273, C255-C261, C263-C289, C293-C327, C306-C319, C310-C349, C329-C343, C351-C373, C368-C385, C371-C380, C389-C526, C411-C561, C433-C441, C572-C617, C586-C612, C599-C637, C619-C625, C627-C652, C659-C696, C672-C686, C676-C716, C698-C710, C718-C740, and C738-C747. D46 serves as a coordination point for Ca(2+). The Cu(+) site is built by M143 and M151. E153 lines the Cu(2+) pocket. A glycan (N-linked (GlcNAc...) asparagine) is linked at N160. D168, N170, and E177 together coordinate Ca(2+). H275 provides a ligand contact to Cu(2+). One can recognise a TIL domain in the interval 293-349 (CPNNMVYLESSSPCVDTCSHLEVSSLCEEHYMDGCFCPEGTVYDDITGSGCIPVSQC). A Cu(2+)-binding site is contributed by H322. M324 contributes to the Cu(+) binding site. The VWFD 2 domain occupies 387-562 (ETCALEGGSH…NTWKAQSSCH (176 aa)). D401 lines the Ca(2+) pocket. N-linked (GlcNAc...) asparagine glycosylation occurs at N421. Ca(2+) contacts are provided by N528, N530, L532, D535, and D536. The N-linked (GlcNAc...) asparagine glycan is linked to N668. N768 is a glycosylation site (N-linked (GlcNAc...) asparagine). Cystine bridges form between C782–C818, C800–C812, C820–C843, C837–C855, C841–C850, C859–C990, C881–C1025, C890–C987, C907–C914, C1035–C1078, C1049–C1073, C1060–C1100, C1080–C1088, C1090–C1115, C1106–C1135, C1119–C1161, C1143–C1185, C1165–C1179, C1187–C1211, C1206–C1236, and C1209–C1219. N838 carries an N-linked (GlcNAc...) asparagine glycan. A VWFD 3 domain is found at 857–1026 (STCSIYGSGH…NSWKEASTCP (170 aa)). Position 871 (D871) interacts with Ca(2+). N-linked (GlcNAc...) asparagine glycosylation occurs at N893. N992, D994, N999, and D1000 together coordinate Ca(2+). N-linked (GlcNAc...) asparagine glycans are attached at residues N1137 and N1152. Residues N1213, N1228, and N1244 are each glycosylated (N-linked (GlcNAc...) asparagine). T1265, T1268, T1269, T1281, and T1292 each carry an O-linked (GalNAc) threonine glycan. 5 residues coordinate Ca(2+): N1305, H1308, G1315, D1316, and E1318. N1352 is a glycosylation site (N-linked (GlcNAc...) asparagine). D1375 and Y1376 together coordinate Ca(2+). 5 tandem repeats follow at residues 1395-1415 (SPTTSTTTLSTTPPTSSPTTL), 1416-1427 (PTSSPVTSSATL), 1428-1437 (PTTSSITSTI), 1438-1453 (SPTTSPTTPLTTSPTT), and 1454-1460 (SPTTSPT). Residues 1395 to 2866 (SPTTSTTTLS…PTTSSTFTTP (1472 aa)) form a disordered region. The stretch at 1478-1497 (PSTTSPTTPSTTPSTTSPTT) is one 7B repeat. One copy of the 8A repeat lies at 1498-1510 (PSTTSPTTPTSTS). The 9B repeat unit spans residues 1530–1556 (SPTTSPTTPSTTSPTISTTTSTISPTT). Residues 1557–1572 (PSTTSPNTPSTTSSTI) form a 10A repeat. The 10B repeat unit spans residues 1573–1588 (PSTTSPTTPSTTSPTI). An 11A repeat occupies 1589–1607 (STTTSTTSPTTPSTTSPTT). The 11B repeat unit spans residues 1608-1634 (PSTTSPTTPSTTSPTISTTTLTTSPTT). 2 consecutive repeat copies span residues 1635–1642 (PSTTSPTT) and 1665–1681 (ISPTTPSTTSPTTLSTT). N2529 and N2910 each carry an N-linked (GlcNAc...) asparagine glycan. Low complexity-rich tracts occupy residues 2975–3623 (PSST…GSTP) and 3631–3706 (PGPT…TSPS). A disordered region spans residues 2975 to 3706 (PSSTTTETPT…SSTSPITSPS (732 aa)). N-linked (GlcNAc...) asparagine glycans are attached at residues N3734, N3745, and N3756. Over residues 3764 to 3774 (STPTPSTPTPT) the composition is skewed to pro residues. A disordered region spans residues 3764 to 3806 (STPTPSTPTPTPSQTTTPSTTSSKSTPSTPQSTSPKSTLSTPT). Over residues 3775-3806 (PSQTTTPSTTSSKSTPSTPQSTSPKSTLSTPT) the composition is skewed to low complexity. 3 N-linked (GlcNAc...) asparagine glycosylation sites follow: N3823, N3830, and N3903. One can recognise a VWFD 4 domain in the interval 3880 to 4063 (CYCTGWGDPH…VNDPSKPHCP (184 aa)). Disulfide bonds link C3882-C4023, C3904-C4062, and C3928-C3936. 13 N-linked (GlcNAc...) asparagine glycosylation sites follow: N3991, N4017, N4028, N4083, N4149, N4183, N4254, N4277, N4351, N4366, N4434, N4465, and N4488. VWFC domains are found at residues 4213 to 4282 (CVGP…TSCK) and 4320 to 4387 (GVCV…KKCQ). Disulfide bonds link C4471–C4518, C4485–C4532, C4494–C4548, and C4498–C4550. The CTCK domain occupies 4471 to 4556 (CSAVSVMKEI…SCLCQDTVCG (86 aa)).

Homomultimer; disulfide-linked. The N- and C-terminus mediate their assembly into higher order structures to form filaments. The CTCK domains of two polypeptides associate in the endoplasmic reticulum to generate intermolecularly disulfide-bonded dimers. These dimers progress to the Golgi apparatus, which is a more acidic environment than the endoplasmic reticulum. Under acidic conditions, the N-termini form non-covalent intermolecular interactions that juxtapose assemblies of the third VWD domain (VWD3) from different CTCK-linked dimers. The VWD3 assemblies then become disulfide bonded to one another to produce long, disulfide-linked polymers that remain highly compact until secretion. Interacts with FCGBP. Interacts with AGR2; disulfide-linked. In terms of processing, O-glycosylated. O-glycosylation is required for mucin assembly. Goblet cells synthesize two forms of mucin that differ in branched chain O-glycosylation and the site of production in the colon. Post-translationally, may undergo proteolytic cleavage in the outer mucus layer of the colon, contributing to the expanded volume and loose nature of this layer which allows for bacterial colonization in contrast to the inner mucus layer which is dense and devoid of bacteria. At low pH of 6 and under, undergoes autocatalytic cleavage in vitro in the N-terminal region of the fourth VWD domain. It is likely that this also occurs in vivo and is triggered by the low pH of the late secretory pathway. Highly expressed in goblet cells of the colon with lower levels in the small intestine and no expression in the stomach (at protein level).

Its subcellular location is the secreted. Its function is as follows. Coats the epithelia of the intestines and other mucus membrane-containing organs to provide a protective, lubricating barrier against particles and infectious agents at mucosal surfaces. Major constituent of the colon mucus, which is mainly formed by large polymeric networks of MUC2 secreted by goblet cells that cover the exposed surfaces of intestine. MUC2 networks form hydrogels that guard the underlying epithelium from pathogens and other hazardous matter entering from the outside world, while permitting nutrient absorption and gas exchange. Acts as a divalent copper chaperone that protects intestinal cells from copper toxicity and facilitates nutritional copper unptake into cells. Binds both Cu(2+) and its reduced form, Cu(1+), at two juxtaposed binding sites: Cu(2+), once reduced to Cu(1+) by vitamin C (ascorbate) or other dietary antioxidants, transits to the other binding site. MUC2-bound Cu(1+) is protected from oxidation in aerobic environments, and can be released for nutritional delivery to cells. Mucin gels store antimicrobial molecules that participate in innate immunity. Mucin glycoproteins also house and feed the microbiome, lubricate tissue surfaces, and may facilitate the removal of contaminants and waste products from the body. Goblet cells synthesize two forms of MUC2 mucin that differ in branched chain O-glycosylation and the site of production in the colon: a (1) 'thick' mucus that wraps the microbiota to form fecal pellets is produced in the proximal, ascending colon. 'Thick' mucus transits along the descending colon and is lubricated by a (2) 'thin' MUC2 mucus produced in the distal colon which adheres to the 'thick' mucus. The sequence is that of Mucin-2 from Mus musculus (Mouse).